An 820-amino-acid polypeptide reads, in one-letter code: Protein phosphatase 1 regulatory subunit 29 (820 aa).

The signal sequence occupies residues 1–22 (MLRLGLCAAALLCVCRPGAVRA). Topologically, residues 23 to 397 (DCWLIEGDKG…APSTSTTTHY (375 aa)) are extracellular. N54 carries N-linked (GlcNAc...) asparagine glycosylation. 5 LRR repeats span residues 56-77 (TVHD…SLNR), 80-101 (NLTD…AFLG), 104-125 (SLQV…MLRG), 128-149 (RLQF…AFSE), and 152-173 (SLIS…TFAS). N80, N85, and N117 each carry an N-linked (GlcNAc...) asparagine glycan. One can recognise an LRRCT domain in the interval 185–247 (NPFNCECDLF…ITVLQAKCRN (63 aa)). 2 N-linked (GlcNAc...) asparagine glycosylation sites follow: N205 and N247. The disordered stretch occupies residues 250-294 (LPARPVSHPTPYSTDAQREPDENSGFNPDEILSVEPPASSTTDAS). In terms of domain architecture, Fibronectin type-III spans 292–379 (DASAGPAIKL…FNHTCLTFTT (88 aa)). The helical transmembrane segment at 398 to 418 (IMTILGCLFGMVIVLGAVYYC) threads the bilayer. The Cytoplasmic segment spans residues 419-820 (LRKRRMQEEK…WKGVSAQQKL (402 aa)). 2 disordered regions span residues 508 to 527 (GAGG…LENG) and 589 to 612 (SATG…SSHH). A phosphoserine mark is found at S619, S668, and S672. The interval 654-677 (TGLAKGDSKYIEKGSPLNSPLDRL) is disordered.

As to quaternary structure, interacts with PPP1CA.

The protein localises to the membrane. Functionally, inhibits phosphatase activity of protein phosphatase 1 (PP1) complexes. This is Protein phosphatase 1 regulatory subunit 29 (ELFN2) from Homo sapiens (Human).